A 488-amino-acid polypeptide reads, in one-letter code: Rhamnulokinase (488 aa).

Position 11–15 (11–15 (ASSGR)) interacts with ATP. Substrate-binding positions include Ala-79 and 234–236 (HDT). The active-site Proton acceptor is Asp-235. Thr-257 lines the ATP pocket. Asn-294 contacts substrate. Positions 302 and 401 each coordinate ATP.

Belongs to the rhamnulokinase family. Requires Mg(2+) as cofactor.

It catalyses the reaction L-rhamnulose + ATP = L-rhamnulose 1-phosphate + ADP + H(+). The protein operates within carbohydrate degradation; L-rhamnose degradation; glycerone phosphate from L-rhamnose: step 2/3. In terms of biological role, involved in the catabolism of L-rhamnose (6-deoxy-L-mannose). Catalyzes the transfer of the gamma-phosphate group from ATP to the 1-hydroxyl group of L-rhamnulose to yield L-rhamnulose 1-phosphate. The chain is Rhamnulokinase from Lactiplantibacillus plantarum (strain ATCC BAA-793 / NCIMB 8826 / WCFS1) (Lactobacillus plantarum).